A 217-amino-acid polypeptide reads, in one-letter code: Small ribosomal subunit protein uS3 (217 aa).

One can recognise a KH type-2 domain in the interval 40–110; sequence IRELVNKSFT…EVYINIHEVR (71 aa).

Belongs to the universal ribosomal protein uS3 family. In terms of assembly, part of the 30S ribosomal subunit. Forms a tight complex with proteins S10 and S14.

Binds the lower part of the 30S subunit head. Binds mRNA in the 70S ribosome, positioning it for translation. The polypeptide is Small ribosomal subunit protein uS3 (Rickettsia bellii (strain OSU 85-389)).